Here is a 223-residue protein sequence, read N- to C-terminus: uncharacterized protein (223 aa).

The first 22 residues, 1–22 (MHLKKALCPALCTFLIHLCLHA), serve as a signal peptide directing secretion. The region spanning 30 to 204 (DIFLMIDKSR…RSIAAAHSKR (175 aa)) is the VWFA domain. The tract at residues 199 to 223 (AAHSKRPTPTPPAKESSPRYTPSLD) is disordered.

This is an uncharacterized protein from Treponema pallidum (strain Nichols).